We begin with the raw amino-acid sequence, 455 residues long: Rho GTPase-activating protein 3 (455 aa).

Over residues 1-12 (MTNFSRSKSTGT) the composition is skewed to polar residues. Residues 1 to 68 (MTNFSRSKST…HASRSGNGSG (68 aa)) form a disordered region. The segment covering 24–33 (GPDKYENIHN) has biased composition (basic and acidic residues). Residues 43 to 54 (STTSTDYYDAST) show a composition bias toward low complexity. The span at 55-64 (PLSSHASRSG) shows a compositional bias: polar residues. Residues 105–118 (IGWPTEVKHVSHVT) form the CRIB domain. Residues 153-331 (KSMQCSYDDR…LILMNLKERE (179 aa)) enclose the Rho-GAP domain. Disordered stretches follow at residues 342 to 366 (KQTS…KPNN) and 432 to 455 (FVSN…SLPW). Over residues 435-446 (NRDEGRKGREAW) the composition is skewed to basic and acidic residues.

Expressed in differentiating xylem cells.

It is found in the cell membrane. In terms of biological role, acts as a GTPase activator for the Rac-type GTPase by converting it to an inactive GDP-bound state. Involved in secondary wall pattern formation. In association with ROPGEF4, mediates local activation of ARAC10/ROP11 to initiate the distinct pattern of secondary cell walls in xylem cells. This is Rho GTPase-activating protein 3 (ROPGAP3) from Arabidopsis thaliana (Mouse-ear cress).